A 358-amino-acid chain; its full sequence is MFEAVEELIGEHADLEKKLADPSVHADQANARKLNKRYAELTPIVATYRSWKQTGDDIETAKEFVADDPDFAAEVKDLEKQREELTEKLRLLLVPRDPSDDKDVILEIKAGAGGDESALFAGDLLRMYLRYAERVGWKTEIIDSTESELGGYKDVQVAVKTKGGQGATEPGQGVWARMKYEGGVHRVQRVPSTESQGRIHTSAAGVLVTPEAEEVDVEIHANDLRIDVYRSSGPGGQSVNTTDSAVRITHLPTGVVASCQNEKSQLQNKEQAMRILRSRLLAAAQEEAEREAADARRSQVRTVDRSEKIRTYNFPENRISDHRVGFKAYNLDQVLDGDLDAMIQACVDADSAAKLAAA.

Gln-237 bears the N5-methylglutamine mark.

Belongs to the prokaryotic/mitochondrial release factor family. Post-translationally, methylated by PrmC. Methylation increases the termination efficiency of RF1.

Its subcellular location is the cytoplasm. Its function is as follows. Peptide chain release factor 1 directs the termination of translation in response to the peptide chain termination codons UAG and UAA. This chain is Peptide chain release factor 1, found in Streptomyces avermitilis (strain ATCC 31267 / DSM 46492 / JCM 5070 / NBRC 14893 / NCIMB 12804 / NRRL 8165 / MA-4680).